The sequence spans 389 residues: Chalcone synthase 1 (389 aa).

Residue cysteine 164 is part of the active site.

It belongs to the thiolase-like superfamily. Chalcone/stilbene synthases family.

It catalyses the reaction (E)-4-coumaroyl-CoA + 3 malonyl-CoA + 3 H(+) = 2',4,4',6'-tetrahydroxychalcone + 3 CO2 + 4 CoA. It functions in the pathway secondary metabolite biosynthesis; flavonoid biosynthesis. The primary product of this enzyme is 4,2',4',6'-tetrahydroxychalcone (also termed naringenin-chalcone or chalcone) which can under specific conditions spontaneously isomerize into naringenin. The polypeptide is Chalcone synthase 1 (CHS1) (Solanum lycopersicum (Tomato)).